A 623-amino-acid polypeptide reads, in one-letter code: tRNA uridine 5-carboxymethylaminomethyl modification enzyme MnmG (623 aa).

Residue 12-17 (GAGHAG) participates in FAD binding. 272 to 286 (GPRYCPSIEDKINRF) lines the NAD(+) pocket.

Belongs to the MnmG family. Homodimer. Heterotetramer of two MnmE and two MnmG subunits. The cofactor is FAD.

Its subcellular location is the cytoplasm. In terms of biological role, NAD-binding protein involved in the addition of a carboxymethylaminomethyl (cmnm) group at the wobble position (U34) of certain tRNAs, forming tRNA-cmnm(5)s(2)U34. This Flavobacterium psychrophilum (strain ATCC 49511 / DSM 21280 / CIP 103535 / JIP02/86) protein is tRNA uridine 5-carboxymethylaminomethyl modification enzyme MnmG.